Consider the following 70-residue polypeptide: Small ribosomal subunit protein bS21 (70 aa).

The protein belongs to the bacterial ribosomal protein bS21 family.

In Methylibium petroleiphilum (strain ATCC BAA-1232 / LMG 22953 / PM1), this protein is Small ribosomal subunit protein bS21.